Reading from the N-terminus, the 148-residue chain is Large ribosomal subunit protein bL9 (148 aa).

Belongs to the bacterial ribosomal protein bL9 family.

In terms of biological role, binds to the 23S rRNA. This chain is Large ribosomal subunit protein bL9, found in Bifidobacterium longum (strain DJO10A).